The sequence spans 232 residues: Phosphatidylserine decarboxylase proenzyme (232 aa).

The active-site Schiff-base intermediate with substrate; via pyruvic acid is the S190. At S190 the chain carries Pyruvic acid (Ser); by autocatalysis.

Belongs to the phosphatidylserine decarboxylase family. PSD-A subfamily. Heterodimer of a large membrane-associated beta subunit and a small pyruvoyl-containing alpha subunit. It depends on pyruvate as a cofactor. Post-translationally, is synthesized initially as an inactive proenzyme. Formation of the active enzyme involves a self-maturation process in which the active site pyruvoyl group is generated from an internal serine residue via an autocatalytic post-translational modification. Two non-identical subunits are generated from the proenzyme in this reaction, and the pyruvate is formed at the N-terminus of the alpha chain, which is derived from the carboxyl end of the proenzyme. The post-translation cleavage follows an unusual pathway, termed non-hydrolytic serinolysis, in which the side chain hydroxyl group of the serine supplies its oxygen atom to form the C-terminus of the beta chain, while the remainder of the serine residue undergoes an oxidative deamination to produce ammonia and the pyruvoyl prosthetic group on the alpha chain.

It is found in the cell membrane. The catalysed reaction is a 1,2-diacyl-sn-glycero-3-phospho-L-serine + H(+) = a 1,2-diacyl-sn-glycero-3-phosphoethanolamine + CO2. It participates in phospholipid metabolism; phosphatidylethanolamine biosynthesis; phosphatidylethanolamine from CDP-diacylglycerol: step 2/2. Functionally, catalyzes the formation of phosphatidylethanolamine (PtdEtn) from phosphatidylserine (PtdSer). The polypeptide is Phosphatidylserine decarboxylase proenzyme (Bartonella bacilliformis (strain ATCC 35685 / KC583 / Herrer 020/F12,63)).